A 141-amino-acid polypeptide reads, in one-letter code: Large ribosomal subunit protein uL11 (141 aa).

The protein belongs to the universal ribosomal protein uL11 family. Part of the ribosomal stalk of the 50S ribosomal subunit. Interacts with L10 and the large rRNA to form the base of the stalk. L10 forms an elongated spine to which L12 dimers bind in a sequential fashion forming a multimeric L10(L12)X complex. One or more lysine residues are methylated.

Functionally, forms part of the ribosomal stalk which helps the ribosome interact with GTP-bound translation factors. This Helicobacter acinonychis (strain Sheeba) protein is Large ribosomal subunit protein uL11.